The primary structure comprises 396 residues: 1-deoxy-D-xylulose 5-phosphate reductoisomerase (396 aa).

Residues threonine 15, glycine 16, serine 17, isoleucine 18, glycine 41, and asparagine 129 each contribute to the NADPH site. Position 130 (lysine 130) interacts with 1-deoxy-D-xylulose 5-phosphate. Glutamate 131 lines the NADPH pocket. Aspartate 155 provides a ligand contact to Mn(2+). 4 residues coordinate 1-deoxy-D-xylulose 5-phosphate: serine 156, glutamate 157, serine 182, and histidine 205. Position 157 (glutamate 157) interacts with Mn(2+). Position 211 (glycine 211) interacts with NADPH. Residues serine 218, asparagine 223, lysine 224, and glutamate 227 each contribute to the 1-deoxy-D-xylulose 5-phosphate site. Glutamate 227 serves as a coordination point for Mn(2+).

The protein belongs to the DXR family. Mg(2+) is required as a cofactor. Requires Mn(2+) as cofactor.

It carries out the reaction 2-C-methyl-D-erythritol 4-phosphate + NADP(+) = 1-deoxy-D-xylulose 5-phosphate + NADPH + H(+). It functions in the pathway isoprenoid biosynthesis; isopentenyl diphosphate biosynthesis via DXP pathway; isopentenyl diphosphate from 1-deoxy-D-xylulose 5-phosphate: step 1/6. In terms of biological role, catalyzes the NADPH-dependent rearrangement and reduction of 1-deoxy-D-xylulose-5-phosphate (DXP) to 2-C-methyl-D-erythritol 4-phosphate (MEP). The protein is 1-deoxy-D-xylulose 5-phosphate reductoisomerase of Xanthomonas campestris pv. campestris (strain 8004).